Reading from the N-terminus, the 235-residue chain is Vinculin (235 aa).

It belongs to the vinculin/alpha-catenin family. Exhibits self-association properties. Post-translationally, phosphorylated on serines, threonines and tyrosines. Acetylated by myristic acid and/or palmitic acid.

It localises to the cell membrane. The protein localises to the cell junction. The protein resides in the adherens junction. It is found in the focal adhesion. Its subcellular location is the cytoplasm. It localises to the cytoskeleton. The protein localises to the sarcolemma. The protein resides in the cell projection. It is found in the podosome. In terms of biological role, involved in cell adhesion. May be involved in the attachment of the actin-based microfilaments to the plasma membrane. This chain is Vinculin (vcl), found in Xenopus laevis (African clawed frog).